The following is a 364-amino-acid chain: C2 calcium-dependent domain-containing protein 4A (364 aa).

Disordered stretches follow at residues 118 to 175 (GSPS…PPRC) and 192 to 242 (AGRS…RPER). The span at 220-233 (SPGSPTQAPVTSLS) shows a compositional bias: polar residues. Positions 254–364 (AGGALRLAAE…ELLLGPLLLL (111 aa)) constitute a C2 domain.

Belongs to the C2CD4 family.

It localises to the nucleus. Its function is as follows. May be involved in inflammatory process. May regulate cell architecture and adhesion. The sequence is that of C2 calcium-dependent domain-containing protein 4A (C2CD4A) from Bos taurus (Bovine).